Here is a 302-residue protein sequence, read N- to C-terminus: Endochitinase 4 (302 aa).

Residues 1-18 form the signal peptide; it reads EFTALSLLFSLLLLTASA. The Chitin-binding type-1 domain occupies 19–60; the sequence is EQCGKQAGGARCAAGLCCSNFGWCGNTNDYCGPGKCQSQCPS. Disulfide bonds link C21-C36, C30-C42, C35-C49, and C54-C58. The tract at residues 59–79 is disordered; the sequence is PSGPSPKPPTPGPGPSGGDIG. Over residues 61–72 the composition is skewed to pro residues; that stretch reads GPSPKPPTPGPG. E144 serves as the catalytic Proton donor. C162 and C182 form a disulfide bridge.

It belongs to the glycosyl hydrolase 19 family. Chitinase class I subfamily.

The protein localises to the vacuole. The enzyme catalyses Random endo-hydrolysis of N-acetyl-beta-D-glucosaminide (1-&gt;4)-beta-linkages in chitin and chitodextrins.. Functionally, defense against chitin-containing fungal pathogens. The chain is Endochitinase 4 (CHTB4) from Solanum tuberosum (Potato).